The sequence spans 359 residues: UbiA prenyltransferase domain-containing protein 1 homolog (359 aa).

The span at 1 to 16 shows a compositional bias: polar residues; the sequence is MATSSQLLPNGNLSRN. The disordered stretch occupies residues 1 to 23; the sequence is MATSSQLLPNGNLSRNGKTKTED. Transmembrane regions (helical) follow at residues 67-89, 98-118, 148-168, 177-197, 200-220, 262-284, 289-311, and 335-355; these read ALRP…LAYR, LATF…GNVV, VVSL…LLAV, LALI…GIGF, IALG…LFAF, IVTL…LLFA, FFIF…PQAF, and FFFG…PTFG.

It belongs to the UbiA prenyltransferase family.

The protein localises to the mitochondrion membrane. The protein operates within quinol/quinone metabolism; menaquinone biosynthesis. In terms of biological role, prenyltransferase that mediates the formation of menaquinone-4 (MK-4), a vitamin K2 isoform, thereby acting as a mitochondrial electron carrier. Mediates the conversion of phylloquinone (PK) into MK-4, probably by cleaving the side chain of phylloquinone (PK) to release 2-methyl-1,4-naphthoquinone (menadione; K3) and then prenylating it with geranylgeranyl pyrophosphate (GGPP) to form MK-4. MK-4 acts as a membrane electron carrier downstream of a electron transport chain complex, improving mitochondrial oxygen consumption. The sequence is that of UbiA prenyltransferase domain-containing protein 1 homolog (heix) from Drosophila melanogaster (Fruit fly).